A 263-amino-acid polypeptide reads, in one-letter code: MTDPVDQIPDHELLDEPRLVVEPGVAARVSSVVAPVLQGMGYRLVRIKVSGEYGCTVQIMAERPDGSMQIEDCEAISKALSPVLDVADPIDKAYRLEISSPGIDRPLVRRSDFERHAGHLVKVEMAVAHQGRKRFRGILQGVKDNAIRLHRDDVQNVDESEVLLVMEDIADARLVLTDELIAESMRRGKIAEREMKRDLGILPPPPPHAKNDPARSPARRNAPKPKLKSTAKAHEKKPPKNTKEHRLAAERLRRGEIDPIEGE.

Residues 192-263 (EREMKRDLGI…RGEIDPIEGE (72 aa)) form a disordered region. Basic residues predominate over residues 217–231 (PARRNAPKPKLKSTA). The segment covering 232–257 (KAHEKKPPKNTKEHRLAAERLRRGEI) has biased composition (basic and acidic residues).

The protein belongs to the RimP family.

It is found in the cytoplasm. Its function is as follows. Required for maturation of 30S ribosomal subunits. The chain is Ribosome maturation factor RimP from Nitrobacter hamburgensis (strain DSM 10229 / NCIMB 13809 / X14).